A 388-amino-acid chain; its full sequence is Leucine aminopeptidase 1 (388 aa).

The N-terminal stretch at 1 to 19 is a signal peptide; sequence MRSSVLFSLYAATLVAAVA. Positions 20–88 are excised as a propeptide; the sequence is HPKDPQIVLQ…TLNHKLSTES (69 aa). N-linked (GlcNAc...) asparagine glycosylation occurs at asparagine 98. Zn(2+) is bound by residues histidine 187, aspartate 206, glutamate 245, and aspartate 272. A disulfide bridge links cysteine 321 with cysteine 325. A Zn(2+)-binding site is contributed by histidine 354.

It belongs to the peptidase M28 family. M28E subfamily. In terms of assembly, monomer. Requires Zn(2+) as cofactor.

It is found in the secreted. Functionally, extracellular aminopeptidase that allows assimilation of proteinaceous substrates. The chain is Leucine aminopeptidase 1 (LAP1) from Leptosphaeria maculans (strain JN3 / isolate v23.1.3 / race Av1-4-5-6-7-8) (Blackleg fungus).